The following is a 32-amino-acid chain: ATSAPAKHDNIXVPIAMFGGSXNYASHLYLYD.

It belongs to the ATPase delta chain family. As to quaternary structure, F-type ATPases have 2 components, CF(1) - the catalytic core - and CF(0) - the membrane proton channel. CF(1) has five subunits: alpha(3), beta(3), gamma(1), delta(1), epsilon(1). CF(0) has three main subunits: a, b and c.

The protein localises to the mitochondrion. It is found in the mitochondrion inner membrane. Functionally, mitochondrial membrane ATP synthase (F(1)F(0) ATP synthase or Complex V) produces ATP from ADP in the presence of a proton gradient across the membrane which is generated by electron transport complexes of the respiratory chain. F-type ATPases consist of two structural domains, F(1) - containing the extramembraneous catalytic core and F(0) - containing the membrane proton channel, linked together by a central stalk and a peripheral stalk. During catalysis, ATP synthesis in the catalytic domain of F(1) is coupled via a rotary mechanism of the central stalk subunits to proton translocation. Part of the complex F(0) domain and the peripheric stalk, which acts as a stator to hold the catalytic alpha(3)beta(3) subcomplex and subunit a/ATP6 static relative to the rotary elements. This chain is ATP synthase subunit O, mitochondrial, found in Spinacia oleracea (Spinach).